The chain runs to 121 residues: Small ribosomal subunit protein uS13 (121 aa).

The segment at 92–121 is disordered; that stretch reads RKGLPVRGQRTKTNARTRKGPRKSGVQLKK.

The protein belongs to the universal ribosomal protein uS13 family. In terms of assembly, part of the 30S ribosomal subunit. Forms a loose heterodimer with protein S19. Forms two bridges to the 50S subunit in the 70S ribosome.

Its function is as follows. Located at the top of the head of the 30S subunit, it contacts several helices of the 16S rRNA. In the 70S ribosome it contacts the 23S rRNA (bridge B1a) and protein L5 of the 50S subunit (bridge B1b), connecting the 2 subunits; these bridges are implicated in subunit movement. Contacts the tRNAs in the A and P-sites. The chain is Small ribosomal subunit protein uS13 from Polynucleobacter asymbioticus (strain DSM 18221 / CIP 109841 / QLW-P1DMWA-1) (Polynucleobacter necessarius subsp. asymbioticus).